The following is a 999-amino-acid chain: Lysosomal alpha-mannosidase (999 aa).

The segment at 1–25 is disordered; the sequence is MVGDARPSGVRAGGCRGAVGSRTSS. The first 50 residues, 1 to 50, serve as a signal peptide directing secretion; sequence MVGDARPSGVRAGGCRGAVGSRTSSRALRPPLPPLSSLFVLFLAAPCAWA. Zn(2+) contacts are provided by histidine 73 and aspartate 75. N-linked (GlcNAc...) asparagine glycosylation occurs at asparagine 134. Aspartate 197 contributes to the Zn(2+) binding site. Aspartate 197 acts as the Nucleophile in catalysis. Residues cysteine 269 and cysteine 274 are joined by a disulfide bond. N-linked (GlcNAc...) asparagine glycosylation occurs at asparagine 369. Histidine 448 serves as a coordination point for Zn(2+). Residues cysteine 495 and cysteine 503 are joined by a disulfide bond. A glycan (N-linked (GlcNAc...) asparagine) is linked at asparagine 499. The propeptide occupies 591-621; it reads SRDLVIQNEYLRARFDPNTGLLMELENLEQN. Asparagine 634, asparagine 640, asparagine 681, asparagine 755, and asparagine 919 each carry an N-linked (GlcNAc...) asparagine glycan.

The protein belongs to the glycosyl hydrolase 38 family. Homodimer. The cofactor is Zn(2+). In terms of processing, processed into 5 peptides of 35/38 kDa (A), 11/13 kDa (B) and 22 kDa (C), 38 kDa (D) and 13/15 kDa (E). The A, B and C peptides are disulfide-linked into a 67 kDa complex. Heavily glycosylated. Some sugar chains are of the high-mannose type.

It is found in the lysosome. It catalyses the reaction Hydrolysis of terminal, non-reducing alpha-D-mannose residues in alpha-D-mannosides.. Functionally, necessary for the catabolism of N-linked carbohydrates released during glycoprotein turnover. This is Lysosomal alpha-mannosidase (MAN2B1) from Bos taurus (Bovine).